A 100-amino-acid chain; its full sequence is Large ribosomal subunit protein uL23 (100 aa).

This sequence belongs to the universal ribosomal protein uL23 family. In terms of assembly, part of the 50S ribosomal subunit. Contacts protein L29, and trigger factor when it is bound to the ribosome.

In terms of biological role, one of the early assembly proteins it binds 23S rRNA. One of the proteins that surrounds the polypeptide exit tunnel on the outside of the ribosome. Forms the main docking site for trigger factor binding to the ribosome. The sequence is that of Large ribosomal subunit protein uL23 from Bradyrhizobium diazoefficiens (strain JCM 10833 / BCRC 13528 / IAM 13628 / NBRC 14792 / USDA 110).